Here is a 341-residue protein sequence, read N- to C-terminus: GTP 3',8-cyclase (341 aa).

Positions 17–235 (TYGRVATDLR…LRTRFELTAE (219 aa)) constitute a Radical SAM core domain. Residue Arg26 coordinates GTP. Cys33 and Cys37 together coordinate [4Fe-4S] cluster. Tyr39 is an S-adenosyl-L-methionine binding site. Residue Cys40 participates in [4Fe-4S] cluster binding. Arg77 provides a ligand contact to GTP. An S-adenosyl-L-methionine-binding site is contributed by Gly81. A GTP-binding site is contributed by Thr108. Position 132 (Ser132) interacts with S-adenosyl-L-methionine. Lys169 contributes to the GTP binding site. Met203 provides a ligand contact to S-adenosyl-L-methionine. [4Fe-4S] cluster contacts are provided by Cys268 and Cys271. Residue 273–275 (RTR) coordinates GTP. A [4Fe-4S] cluster-binding site is contributed by Cys285.

Belongs to the radical SAM superfamily. MoaA family. In terms of assembly, monomer and homodimer. [4Fe-4S] cluster is required as a cofactor.

The catalysed reaction is GTP + AH2 + S-adenosyl-L-methionine = (8S)-3',8-cyclo-7,8-dihydroguanosine 5'-triphosphate + 5'-deoxyadenosine + L-methionine + A + H(+). Its pathway is cofactor biosynthesis; molybdopterin biosynthesis. In terms of biological role, catalyzes the cyclization of GTP to (8S)-3',8-cyclo-7,8-dihydroguanosine 5'-triphosphate. In Streptomyces coelicolor (strain ATCC BAA-471 / A3(2) / M145), this protein is GTP 3',8-cyclase.